Here is a 96-residue protein sequence, read N- to C-terminus: MKKLTIFSGGLGAVFSVLAQLFAVIDDSYTLGNLWFLGALAGIITMLASIQTNNKPVFSILLIASSVIGLLGTGLVYIIPTLFNIIIIYKFSKVSQ.

The next 3 membrane-spanning stretches (helical) occupy residues 3-23 (KLTI…QLFA), 30-50 (TLGN…LASI), and 68-88 (IGLL…IIII).

Its subcellular location is the cell membrane. This is an uncharacterized protein from Bacillus subtilis (strain 168).